The chain runs to 486 residues: Adenylate kinase 8 (486 aa).

Adenylate kinase regions lie at residues 58 to 258 and 269 to 471; these read PRII…NFIC and PRIL…SRLV. 67-72 provides a ligand contact to ATP; that stretch reads ASGKKT. Positions 87-112 are NMP 1; it reads TFCDILKDDSDLTRAAQSYYDKKQNV. AMP-binding positions include 139-142 and Arg-202; that span reads AIPK. Positions 176 to 205 are LID 1; that stretch reads GKRIDPVTGDVYHVTFMWPESEEVAQRLET. 278–283 provides a ligand contact to ATP; the sequence is GAGRNL. Positions 298-327 are NMP 2; it reads CCGELLKAVSADESHMGELIKPYLESEQQV. Residues 325-327 and 354-357 contribute to the AMP site; these read QQV and GFPR. An LID 2 region spans residues 391–424; that stretch reads LRAVDPVTGEWYHSVYKPPPGPEVQARLRFNPQH. Arg-392 provides a ligand contact to ATP. An AMP-binding site is contributed by Arg-432.

The protein belongs to the adenylate kinase family.

It localises to the cytoplasm. The protein resides in the cytosol. The catalysed reaction is AMP + ATP = 2 ADP. It catalyses the reaction a 2'-deoxyribonucleoside 5'-diphosphate + ATP = a 2'-deoxyribonucleoside 5'-triphosphate + ADP. It carries out the reaction a ribonucleoside 5'-diphosphate + ATP = a ribonucleoside 5'-triphosphate + ADP. Nucleoside monophosphate (NMP) kinase that catalyzes the reversible transfer of the terminal phosphate group between nucleoside triphosphates and monophosphates. Has highest activity toward AMP, and weaker activity toward dAMP, CMP and dCMP. Also displays broad nucleoside diphosphate kinase activity. The chain is Adenylate kinase 8 (ak8) from Danio rerio (Zebrafish).